Reading from the N-terminus, the 154-residue chain is Protein X (154 aa).

The interval 68 to 117 (PCALRFTSARRMETTVNAPQSLPTPLHKRTLGLSPRSTTWIEEYIKDCVF) is mitochondrial targeting sequence.

The protein belongs to the orthohepadnavirus protein X family. In terms of assembly, may form homodimer. May interact with host CEBPA, CFLAR, CREB1, DDB1, E4F1, HBXIP, HSPD1/HSP60, NFKBIA, POLR2E and SMAD4. Interacts with host SMC5-SMC6 complex and induces its degradation. Interacts with host TRPC4AP; leading to prevent ubiquitination of TRPC4AP. Interacts with host PLSCR1; this interaction promotes ubiquitination and degradation of HBx and impairs HBx-mediated cell proliferation. In terms of processing, a fraction may be phosphorylated in insect cells and HepG2 cells, a human hepatoblastoma cell line. Phosphorylated in vitro by host protein kinase C or mitogen-activated protein kinase. N-acetylated in insect cells.

It is found in the host cytoplasm. The protein localises to the host nucleus. Its subcellular location is the host mitochondrion. Functionally, multifunctional protein that plays a role in silencing host antiviral defenses and promoting viral transcription. Does not seem to be essential for HBV infection. May be directly involved in development of cirrhosis and liver cancer (hepatocellular carcinoma). Most of cytosolic activities involve modulation of cytosolic calcium. The effect on apoptosis is controversial depending on the cell types in which the studies have been conducted. May induce apoptosis by localizing in mitochondria and causing loss of mitochondrial membrane potential. May also modulate apoptosis by binding host CFLAR, a key regulator of the death-inducing signaling complex (DISC). Promotes viral transcription by using the host E3 ubiquitin ligase DDB1 to target the SMC5-SMC6 complex to proteasomal degradation. This host complex would otherwise bind to viral episomal DNA, and prevents its transcription. Moderately stimulates transcription of many different viral and cellular transcription elements. Promoters and enhancers stimulated by HBx contain DNA binding sites for NF-kappa-B, AP-1, AP-2, c-EBP, ATF/CREB, or the calcium-activated factor NF-AT. The polypeptide is Protein X (Homo sapiens (Human)).